A 296-amino-acid polypeptide reads, in one-letter code: Protoheme IX farnesyltransferase (296 aa).

9 helical membrane-spanning segments follow: residues 27 to 47 (IMYL…GTIH), 48 to 68 (PLIG…AGAL), 98 to 118 (ALEC…LTVN), 120 to 140 (VSAI…TMVL), 148 to 168 (IVIG…SVTG), 175 to 195 (LLLF…LSLL), 219 to 239 (HIMG…LYVA), 242 to 262 (VLYE…AYCL), and 274 to 294 (CMGL…AIAL).

It belongs to the UbiA prenyltransferase family. Protoheme IX farnesyltransferase subfamily.

It localises to the cell inner membrane. It catalyses the reaction heme b + (2E,6E)-farnesyl diphosphate + H2O = Fe(II)-heme o + diphosphate. The protein operates within porphyrin-containing compound metabolism; heme O biosynthesis; heme O from protoheme: step 1/1. Converts heme B (protoheme IX) to heme O by substitution of the vinyl group on carbon 2 of heme B porphyrin ring with a hydroxyethyl farnesyl side group. This chain is Protoheme IX farnesyltransferase, found in Anaplasma phagocytophilum (strain HZ).